Reading from the N-terminus, the 25-residue chain is Arginine attenuator peptide (25 aa).

It belongs to the arginine attenuator peptide family.

Its function is as follows. Arginine attenuator peptide (AAP) that has a regulatory role in the production of arginine-specific carbamoyl phosphate synthetase. Encoded by an upstream open reading frame (uORF) within the 5'-leader region of arginine-specific carbamoyl phosphate synthetase small chain (CPA1) mRNA, it attenuates the translation of the downstream CPA1 ORF. In the presence of high concentrations of arginine, ribosomes translating the uORF encoding AAP stall at the termination codon, resulting in reduced translation from the downstream CPA1 initiation codon. The protein is Arginine attenuator peptide of Saccharomyces cerevisiae (strain ATCC 204508 / S288c) (Baker's yeast).